Here is a 371-residue protein sequence, read N- to C-terminus: Probable F-box protein At1g65740 (371 aa).

In terms of domain architecture, F-box spans 2–49; sequence VDWSTLPEELLHFIAARSFSLVEYKRFSSICVSWHSSVSGVKKNPFHR.

The chain is Probable F-box protein At1g65740 from Arabidopsis thaliana (Mouse-ear cress).